A 402-amino-acid polypeptide reads, in one-letter code: Glutamate N-acetyltransferase (402 aa).

Residues Thr151, Lys178, Thr189, Glu267, Asn397, and Thr402 each contribute to the substrate site. Residue Thr189 is the Nucleophile of the active site.

This sequence belongs to the ArgJ family. Heterotetramer of two alpha and two beta chains.

Its subcellular location is the cytoplasm. The catalysed reaction is N(2)-acetyl-L-ornithine + L-glutamate = N-acetyl-L-glutamate + L-ornithine. It participates in amino-acid biosynthesis; L-arginine biosynthesis; L-ornithine and N-acetyl-L-glutamate from L-glutamate and N(2)-acetyl-L-ornithine (cyclic): step 1/1. Catalyzes the transfer of the acetyl group from N(2)-acetylornithine to glutamate, forming N-acetylglutamate and L-ornithine. This is Glutamate N-acetyltransferase from Methanothermobacter thermautotrophicus (strain ATCC 29096 / DSM 1053 / JCM 10044 / NBRC 100330 / Delta H) (Methanobacterium thermoautotrophicum).